The following is a 371-amino-acid chain: Cytochrome b (371 aa).

4 consecutive transmembrane segments (helical) span residues 25 to 45, 69 to 90, 105 to 125, and 170 to 190; these read FGSMLLTCSALQVMTGFSLSM, WVMQNLHAIGASMFFICIYMYI, WLSGTTLLIMLMATAFFGYVL, and FFALHFILPFGIISVSSIHIM. Residue His75 participates in heme b binding. The heme b site is built by His174 and His188. Position 193 (His193) interacts with a ubiquinone. Transmembrane regions (helical) follow at residues 218–238, 280–300, 312–332, and 339–358; these read YKDILMISIMIITLLLTVSFF, LGGALALVMSIMILFTMPFTH, LMQFMFWTLVATFVIITWTAT, and FTTISQVASIIYFTFFMSNP.

The protein belongs to the cytochrome b family. The cytochrome bc1 complex contains 3 respiratory subunits (MT-CYB, CYC1 and UQCRFS1), 2 core proteins (UQCRC1 and UQCRC2) and probably 6 low-molecular weight proteins. Heme b serves as cofactor.

The protein resides in the mitochondrion inner membrane. In terms of biological role, component of the ubiquinol-cytochrome c reductase complex (complex III or cytochrome b-c1 complex) that is part of the mitochondrial respiratory chain. The b-c1 complex mediates electron transfer from ubiquinol to cytochrome c. Contributes to the generation of a proton gradient across the mitochondrial membrane that is then used for ATP synthesis. This Candoia aspera (New Guinea boa) protein is Cytochrome b (MT-CYB).